We begin with the raw amino-acid sequence, 320 residues long: Cytochrome f (320 aa).

An N-terminal signal peptide occupies residues 1-35 (MQNRNTFSWVKEPINRSISVLIIIYVITQTSISNA). Positions 36, 56, 59, and 60 each coordinate heme. Residues 286–306 (VQGLLFFLASVTLAQIFLVLK) traverse the membrane as a helical segment.

Belongs to the cytochrome f family. The 4 large subunits of the cytochrome b6-f complex are cytochrome b6, subunit IV (17 kDa polypeptide, petD), cytochrome f and the Rieske protein, while the 4 small subunits are PetG, PetL, PetM and PetN. The complex functions as a dimer. Heme serves as cofactor.

Its subcellular location is the plastid. The protein resides in the chloroplast thylakoid membrane. Functionally, component of the cytochrome b6-f complex, which mediates electron transfer between photosystem II (PSII) and photosystem I (PSI), cyclic electron flow around PSI, and state transitions. The protein is Cytochrome f of Piper cenocladum (Ant piper).